Consider the following 92-residue polypeptide: Small ribosomal subunit protein uS19c (92 aa).

This sequence belongs to the universal ribosomal protein uS19 family.

It localises to the plastid. It is found in the chloroplast. Functionally, protein S19 forms a complex with S13 that binds strongly to the 16S ribosomal RNA. This chain is Small ribosomal subunit protein uS19c, found in Acorus calamus (Sweet flag).